The primary structure comprises 311 residues: HPr kinase/phosphorylase (311 aa).

Residues His-138 and Lys-159 contribute to the active site. 153 to 160 (GKSGVGKS) contributes to the ATP binding site. Residue Ser-160 participates in Mg(2+) binding. The Proton acceptor; for phosphorylation activity. Proton donor; for dephosphorylation activity role is filled by Asp-177. Positions 201–210 (LEIRGLGIIN) are important for the catalytic mechanism of both phosphorylation and dephosphorylation. Glu-202 provides a ligand contact to Mg(2+). Arg-243 is a catalytic residue. The interval 264-269 (PVRPGR) is important for the catalytic mechanism of dephosphorylation.

This sequence belongs to the HPrK/P family. Homohexamer. Mg(2+) is required as a cofactor.

The enzyme catalyses [HPr protein]-L-serine + ATP = [HPr protein]-O-phospho-L-serine + ADP + H(+). It catalyses the reaction [HPr protein]-O-phospho-L-serine + phosphate + H(+) = [HPr protein]-L-serine + diphosphate. In terms of biological role, catalyzes the ATP- as well as the pyrophosphate-dependent phosphorylation of a specific serine residue in HPr, a phosphocarrier protein of the phosphoenolpyruvate-dependent sugar phosphotransferase system (PTS). HprK/P also catalyzes the pyrophosphate-producing, inorganic phosphate-dependent dephosphorylation (phosphorolysis) of seryl-phosphorylated HPr (P-Ser-HPr). The two antagonistic activities of HprK/P are regulated by several intracellular metabolites, which change their concentration in response to the absence or presence of rapidly metabolisable carbon sources (glucose, fructose, etc.) in the growth medium. Also phosphorylates/dephosphorylates the HPr-like catabolite repression protein crh on a specific serine residue. Therefore, by controlling the phosphorylation state of HPr and crh, HPrK/P is a sensor enzyme that plays a major role in the regulation of carbon metabolism and sugar transport: it mediates carbon catabolite repression (CCR), and regulates PTS-catalyzed carbohydrate uptake and inducer exclusion. This Geobacillus kaustophilus (strain HTA426) protein is HPr kinase/phosphorylase.